Consider the following 101-residue polypeptide: Protein RnfH (101 aa).

Belongs to the UPF0125 (RnfH) family.

The chain is Protein RnfH from Pseudomonas aeruginosa (strain LESB58).